The chain runs to 485 residues: Glutamyl-tRNA(Gln) amidotransferase subunit A (485 aa).

Active-site charge relay system residues include Lys82 and Ser157. The active-site Acyl-ester intermediate is Ser181.

Belongs to the amidase family. GatA subfamily. Heterotrimer of A, B and C subunits.

It catalyses the reaction L-glutamyl-tRNA(Gln) + L-glutamine + ATP + H2O = L-glutaminyl-tRNA(Gln) + L-glutamate + ADP + phosphate + H(+). Allows the formation of correctly charged Gln-tRNA(Gln) through the transamidation of misacylated Glu-tRNA(Gln) in organisms which lack glutaminyl-tRNA synthetase. The reaction takes place in the presence of glutamine and ATP through an activated gamma-phospho-Glu-tRNA(Gln). The sequence is that of Glutamyl-tRNA(Gln) amidotransferase subunit A from Treponema denticola (strain ATCC 35405 / DSM 14222 / CIP 103919 / JCM 8153 / KCTC 15104).